A 1016-amino-acid polypeptide reads, in one-letter code: EMILIN-1 (1016 aa).

Positions M1–A21 are cleaved as a signal peptide. Positions H56–E131 constitute an EMI domain. 3 disulfides stabilise this stretch: C60–C121, C85–C92, and C120–C129. A disordered region spans residues P135 to E182. A compositionally biased stretch (low complexity) spans P139–S165. An N-linked (GlcNAc...) asparagine glycan is attached at N154. Positions T216 to Q256 form a coiled coil. Disordered regions lie at residues E257 to E288 and R383 to S402. Low complexity predominate over residues G266–P279. The stretch at P356 to P420 forms a coiled coil. Gly residues predominate over residues E386 to P397. N-linked (GlcNAc...) asparagine glycosylation is present at N415. The tract at residues S416–L435 is disordered. N-linked (GlcNAc...) asparagine glycans are attached at residues N455 and N561. The stretch at A576–S603 forms a coiled coil. Residue N658 is glycosylated (N-linked (GlcNAc...) asparagine). Residues I685–S752 adopt a coiled-coil conformation. N-linked (GlcNAc...) asparagine glycosylation is found at N766 and N794. 2 disordered regions span residues D811–A863 and R942–S961. Residues G814 to P864 form the Collagen-like domain. Positions P821–S839 are enriched in pro residues. Positions G835–E857 form a coiled coil. The C1q domain maps to A866–L1013.

Homotrimer associated through a moderately stable interaction of the C-terminal globular C1q domains, allowing the nucleation of the triple helix and then a further quaternary assembly to higher-order polymers via intermolecular disulfide bonds. Interacts with EMILIN2. Interacts with EFEMP2; this interaction promotes the incorporation of EFEMP2 into the extracellular matrix. As to expression, distributed in tissues where resilience and elastic recoil are prominent. Highest levels in the adult small intestine, aorta, lung, uterus, and appendix and in the fetal spleen, kidney, lung, and heart; intermediate expression was detected in adult liver, ovary, colon, stomach, lymph node and spleen; adult heart, bladder, prostate, adrenal gland, mammary gland, placenta and kidney showed low expression whereas a series of other adult tissues, including skeletal muscle and different regions of adult brain show no expression. Detected in intramuscular nerve bundles, where it particularly localizes in the epineurium, the most external layer of dense connective tissue enclosing the nerve.

It localises to the secreted. The protein resides in the extracellular space. The protein localises to the extracellular matrix. In terms of biological role, involved in elastic and collagen fibers formation. It is required for EFEMP2 deposition into the extracellular matrix, and collagen network assembly and cross-linking via protein-lysine 6-oxidase/LOX activity. May be responsible for anchoring smooth muscle cells to elastic fibers, and may be involved in the processes that regulate vessel assembly. Has cell adhesive capacity. This is EMILIN-1 (EMILIN1) from Homo sapiens (Human).